Here is a 137-residue protein sequence, read N- to C-terminus: MLRTMLNGKIHRATVTHADLHYVGSITIDADLMDAANLVDGEQVHVVNITNGHRLVTYVLTGERGSGVIGINGAAARLVAPGDLVIIISYVQLTEAERATHRPHVVHVDANNRIVALGDDLAEPVPGSDQKSGALLP.

Catalysis depends on Ser-25, which acts as the Schiff-base intermediate with substrate; via pyruvic acid. Ser-25 carries the pyruvic acid (Ser) modification. Thr-57 contacts substrate. The Proton donor role is filled by Tyr-58. 73 to 75 (GAA) serves as a coordination point for substrate.

Belongs to the PanD family. Heterooctamer of four alpha and four beta subunits. The cofactor is pyruvate. Is synthesized initially as an inactive proenzyme, which is activated by self-cleavage at a specific serine bond to produce a beta-subunit with a hydroxyl group at its C-terminus and an alpha-subunit with a pyruvoyl group at its N-terminus.

It localises to the cytoplasm. The catalysed reaction is L-aspartate + H(+) = beta-alanine + CO2. It participates in cofactor biosynthesis; (R)-pantothenate biosynthesis; beta-alanine from L-aspartate: step 1/1. In terms of biological role, catalyzes the pyruvoyl-dependent decarboxylation of aspartate to produce beta-alanine. The sequence is that of Aspartate 1-decarboxylase from Thermobifida fusca (strain YX).